The following is a 119-amino-acid chain: MTRVPRGYIARRRRTKMRSFASNFRGAHLRLNRMITQQVKRAFVSSHRDRGRQKRDFRRLWITRINAATRIFKVFDSYSKLIHNLYKKKLILNRKMLAQVAVSNPNNLYTISKKIKIIN.

Belongs to the bacterial ribosomal protein bL20 family.

It localises to the plastid. It is found in the chloroplast. Binds directly to 23S ribosomal RNA and is necessary for the in vitro assembly process of the 50S ribosomal subunit. It is not involved in the protein synthesizing functions of that subunit. This is Large ribosomal subunit protein bL20c from Brachypodium distachyon (Purple false brome).